A 340-amino-acid polypeptide reads, in one-letter code: Thioesterase pkgB (340 aa).

The Zn(2+) site is built by His-97, His-99, Asp-101, His-102, and His-205. Residue Asp-101 is the Proton donor/acceptor of the active site. Positions 242–258 (SSRNGGSTSSIGSVSES) are enriched in low complexity. Positions 242–271 (SSRNGGSTSSIGSVSESGDSDEEDNNMKTS) are disordered.

The protein belongs to the metallo-beta-lactamase superfamily. It depends on Zn(2+) as a cofactor.

The catalysed reaction is 3,5,7,9,11,13-hexaoxotetradecanoyl-[ACP] = dehydrocitreoisocoumarin + holo-[ACP] + H2O. It catalyses the reaction 3,5,7,9,11-pentaoxododecanoyl-[ACP] = 6,8-dihydroxy-3-(2-oxopropyl)-isocoumarin + holo-[ACP] + H2O. Its function is as follows. Thioesterase; part of the pkg gene cluster that mediates the biosynthesis of dihydrocitreoisocoumarin and 6,8-dihydroxy-3-(2-oxopropyl)-isocoumarin. The non-reducing polyketide synthase pkgA performs the condensation of one acetyl-CoA starter unit with 6 and 5 malonyl-CoA units, respectively. As pkgA lacks a releasing domain, the thioesterase pkgB is necessary to break the thioester bond and release dihydrocitreoisocoumarin and 6,8-dihydroxy-3-(2-oxopropyl)-isocoumarin from pkgA. The chain is Thioesterase pkgB from Emericella nidulans (strain FGSC A4 / ATCC 38163 / CBS 112.46 / NRRL 194 / M139) (Aspergillus nidulans).